A 258-amino-acid polypeptide reads, in one-letter code: Snake venom serine protease 2 (258 aa).

The N-terminal stretch at 1–18 (MVLIRVLANLLILQLSYA) is a signal peptide. The propeptide occupies 19-24 (QKSSEL). Residues 25-249 (VFGGRPCNIN…YNDWVQSIIA (225 aa)) form the Peptidase S1 domain. Disulfide bonds link Cys-31-Cys-163, Cys-50-Cys-66, Cys-98-Cys-256, Cys-142-Cys-210, Cys-174-Cys-189, and Cys-200-Cys-225. A glycan (N-linked (GlcNAc...) asparagine) is linked at Asn-44. Active-site charge relay system residues include His-65 and Asp-110. 2 N-linked (GlcNAc...) asparagine glycosylation sites follow: Asn-122 and Asn-185. Ser-204 (charge relay system) is an active-site residue.

Belongs to the peptidase S1 family. Snake venom subfamily. As to quaternary structure, monomer. As to expression, expressed by the venom gland.

The protein localises to the secreted. Its activity is regulated as follows. Inhibited by PMSF at 2 mM concentration but not by EDTA. Snake venom serine protease that may act in the hemostasis system of the prey. Has weak fibrinogen clotting activity. Possesses amidolysis activity towards S-2251 (substrate for plasmin) but has no hydrolytic activity with S-2302 (plasma kallikrein substrate) or S-2238 (thrombin substrate). The sequence is that of Snake venom serine protease 2 from Protobothrops jerdonii (Jerdon's pitviper).